A 77-amino-acid polypeptide reads, in one-letter code: DNA-directed RNA polymerase subunit epsilon (77 aa).

Belongs to the RNA polymerase subunit epsilon family. In terms of assembly, RNAP is composed of a core of 2 alpha, a beta and a beta' subunit. The core is associated with a delta subunit, and at least one of epsilon or omega. When a sigma factor is associated with the core the holoenzyme is formed, which can initiate transcription.

It catalyses the reaction RNA(n) + a ribonucleoside 5'-triphosphate = RNA(n+1) + diphosphate. A non-essential component of RNA polymerase (RNAP). In Streptococcus pneumoniae (strain Hungary19A-6), this protein is DNA-directed RNA polymerase subunit epsilon.